The sequence spans 169 residues: Large ribosomal subunit protein uL10 (169 aa).

It belongs to the universal ribosomal protein uL10 family. As to quaternary structure, part of the ribosomal stalk of the 50S ribosomal subunit. The N-terminus interacts with L11 and the large rRNA to form the base of the stalk. The C-terminus forms an elongated spine to which L12 dimers bind in a sequential fashion forming a multimeric L10(L12)X complex.

Functionally, forms part of the ribosomal stalk, playing a central role in the interaction of the ribosome with GTP-bound translation factors. This chain is Large ribosomal subunit protein uL10, found in Rickettsia typhi (strain ATCC VR-144 / Wilmington).